The following is an 889-amino-acid chain: Serine/threonine-protein kinase D3 (889 aa).

4 positions are modified to phosphoserine: S27, S37, S41, and S44. The Phorbol-ester/DAG-type 1 zinc-finger motif lies at 154 to 204 (PHALYVHSYKAPTFCDYCGEMLWGLVRQGLKCEGCGLNYHKRCAFKIPNNC). S213 and S216 each carry phosphoserine. The Phorbol-ester/DAG-type 2 zinc finger occupies 271–321 (PHTFAVHSYGRPTICQYCKRLLKGLFRQGMQCKDCKFNCHKRCASKVPRDC). Residues 336 to 370 (TDADMPMDIDSSDVNSDGSRGLDDSEEPSPPEDKM) form a disordered region. A phosphoserine mark is found at S346, S391, and S395. The region spanning 416 to 532 (TVVKEGWMVH…WEKAIRQALM (117 aa)) is the PH domain. The residue at position 426 (Y426) is a Phosphotyrosine. S442 is subject to Phosphoserine. Phosphotyrosine is present on Y457. A Phosphothreonine modification is found at T535. S539 carries the post-translational modification Phosphoserine. In terms of domain architecture, Protein kinase spans 575–831 (IFADEVLGSG…VDKSLSHPWL (257 aa)). ATP is bound by residues 581 to 589 (LGSGQFGIV) and K604. The active-site Proton acceptor is the D698. Phosphoserine; by PKC is present on S730. S734 carries the phosphoserine; by autocatalysis modification. Y741 carries the post-translational modification Phosphotyrosine.

The protein belongs to the protein kinase superfamily. CAMK Ser/Thr protein kinase family. PKD subfamily. Mg(2+) serves as cofactor.

It localises to the cytoplasm. The protein localises to the membrane. The catalysed reaction is L-seryl-[protein] + ATP = O-phospho-L-seryl-[protein] + ADP + H(+). The enzyme catalyses L-threonyl-[protein] + ATP = O-phospho-L-threonyl-[protein] + ADP + H(+). Its activity is regulated as follows. Activated by DAG and phorbol esters. Phorbol-ester/DAG-type domains 1 and 2 bind both DAG and phorbol ester with high affinity and mediate translocation to the cell membrane. Autophosphorylation of Ser-734 and phosphorylation of Ser-730 by PKC relieves auto-inhibition by the PH domain. In terms of biological role, converts transient diacylglycerol (DAG) signals into prolonged physiological effects, downstream of PKC. Involved in resistance to oxidative stress. The chain is Serine/threonine-protein kinase D3 (Prkd3) from Mus musculus (Mouse).